Reading from the N-terminus, the 222-residue chain is 2-C-methyl-D-erythritol 4-phosphate cytidylyltransferase (222 aa).

It belongs to the IspD/TarI cytidylyltransferase family. IspD subfamily.

It catalyses the reaction 2-C-methyl-D-erythritol 4-phosphate + CTP + H(+) = 4-CDP-2-C-methyl-D-erythritol + diphosphate. Its pathway is isoprenoid biosynthesis; isopentenyl diphosphate biosynthesis via DXP pathway; isopentenyl diphosphate from 1-deoxy-D-xylulose 5-phosphate: step 2/6. Functionally, catalyzes the formation of 4-diphosphocytidyl-2-C-methyl-D-erythritol from CTP and 2-C-methyl-D-erythritol 4-phosphate (MEP). The chain is 2-C-methyl-D-erythritol 4-phosphate cytidylyltransferase from Porphyromonas gingivalis (strain ATCC 33277 / DSM 20709 / CIP 103683 / JCM 12257 / NCTC 11834 / 2561).